We begin with the raw amino-acid sequence, 399 residues long: Argininosuccinate synthase (399 aa).

9–17 is a binding site for ATP; that stretch reads AYSGGLDTS. Y85 is a binding site for L-citrulline. G115 serves as a coordination point for ATP. 3 residues coordinate L-aspartate: T117, N121, and D122. Position 121 (N121) interacts with L-citrulline. The L-citrulline site is built by R125, S173, E258, and Y270.

It belongs to the argininosuccinate synthase family. Type 1 subfamily. Homotetramer.

The protein resides in the cytoplasm. The enzyme catalyses L-citrulline + L-aspartate + ATP = 2-(N(omega)-L-arginino)succinate + AMP + diphosphate + H(+). Its pathway is amino-acid biosynthesis; L-arginine biosynthesis; L-arginine from L-ornithine and carbamoyl phosphate: step 2/3. The sequence is that of Argininosuccinate synthase from Streptococcus uberis (strain ATCC BAA-854 / 0140J).